The sequence spans 141 residues: Large ribosomal subunit protein uL11 (141 aa).

It belongs to the universal ribosomal protein uL11 family. Part of the ribosomal stalk of the 50S ribosomal subunit. Interacts with L10 and the large rRNA to form the base of the stalk. L10 forms an elongated spine to which L12 dimers bind in a sequential fashion forming a multimeric L10(L12)X complex. In terms of processing, one or more lysine residues are methylated.

In terms of biological role, forms part of the ribosomal stalk which helps the ribosome interact with GTP-bound translation factors. This is Large ribosomal subunit protein uL11 from Crocosphaera subtropica (strain ATCC 51142 / BH68) (Cyanothece sp. (strain ATCC 51142)).